The sequence spans 37 residues: Cytochrome b6-f complex subunit 5 (37 aa).

Residues 5-25 (FLLGIILGLIPITLIGLFVTA) form a helical membrane-spanning segment.

This sequence belongs to the PetG family. In terms of assembly, the 4 large subunits of the cytochrome b6-f complex are cytochrome b6, subunit IV (17 kDa polypeptide, PetD), cytochrome f and the Rieske protein, while the 4 small subunits are PetG, PetL, PetM and PetN. The complex functions as a dimer.

Its subcellular location is the plastid membrane. Functionally, component of the cytochrome b6-f complex, which mediates electron transfer between photosystem II (PSII) and photosystem I (PSI), cyclic electron flow around PSI, and state transitions. PetG is required for either the stability or assembly of the cytochrome b6-f complex. This Cuscuta obtusiflora (Peruvian dodder) protein is Cytochrome b6-f complex subunit 5.